Here is a 206-residue protein sequence, read N- to C-terminus: MARGKFITFEGIDGAGKTTHLSWFRERLEQKVASTGRSVVMTREPGGTPLGEQIREIVLHQKMDLETEALLMFALRRQHLAEVIEPALARGDWVLSDRFTDATFAYQGGGRGLPRDKLETLERWVQGGFQPDLTVLFDLAPEIANERRSAARDPDRFESESVAFFNRTRAEYLRRAEEAPYRFAIIDSAQSIVQIQRKLEELIAIL.

Residue 11 to 18 (GIDGAGKT) coordinates ATP.

It belongs to the thymidylate kinase family.

The catalysed reaction is dTMP + ATP = dTDP + ADP. In terms of biological role, phosphorylation of dTMP to form dTDP in both de novo and salvage pathways of dTTP synthesis. This chain is Thymidylate kinase, found in Paraburkholderia phytofirmans (strain DSM 17436 / LMG 22146 / PsJN) (Burkholderia phytofirmans).